A 192-amino-acid polypeptide reads, in one-letter code: Large ribosomal subunit protein bL9 (192 aa).

A disordered region spans residues 173–192 (ALRPEDFFDPEADGLDENEA). Residues 179 to 192 (FFDPEADGLDENEA) show a composition bias toward acidic residues.

Belongs to the bacterial ribosomal protein bL9 family.

Its function is as follows. Binds to the 23S rRNA. The protein is Large ribosomal subunit protein bL9 of Rhizobium etli (strain ATCC 51251 / DSM 11541 / JCM 21823 / NBRC 15573 / CFN 42).